Here is a 750-residue protein sequence, read N- to C-terminus: Polyribonucleotide nucleotidyltransferase (750 aa).

Residues Asp492 and Asp498 each coordinate Mg(2+). A KH domain is found at 559-618 (PQLSVVEVNPEIIRVIIGPGGKNIKAITSATGASIDIEDSGRISIFAPTKESMDMAREMV). In terms of domain architecture, S1 motif spans 628–695 (GKNYTAKVRK…NDGRVRASRK (68 aa)). The disordered stretch occupies residues 705–750 (EWDPADTARPPRKPRDRDDRGDRGGRGDRGDRGGRNGRGGDRRDRR). Residues 717–750 (KPRDRDDRGDRGGRGDRGDRGGRNGRGGDRRDRR) are compositionally biased toward basic and acidic residues.

The protein belongs to the polyribonucleotide nucleotidyltransferase family. Mg(2+) serves as cofactor.

Its subcellular location is the cytoplasm. It catalyses the reaction RNA(n+1) + phosphate = RNA(n) + a ribonucleoside 5'-diphosphate. Its function is as follows. Involved in mRNA degradation. Catalyzes the phosphorolysis of single-stranded polyribonucleotides processively in the 3'- to 5'-direction. The sequence is that of Polyribonucleotide nucleotidyltransferase from Oleidesulfovibrio alaskensis (strain ATCC BAA-1058 / DSM 17464 / G20) (Desulfovibrio alaskensis).